Here is a 417-residue protein sequence, read N- to C-terminus: Carboxypeptidase A2 (417 aa).

A signal peptide spans 1 to 16 (MRLTLLLAALLGYIYC). A propeptide spans 17–112 (QETFVGDQVL…EMLFNQQRER (96 aa)) (activation peptide). A Peptidase M14 domain is found at 120–412 (AYHTLEEIYQ…LGLKTIMEHV (293 aa)). Zn(2+) is bound by residues H177 and E180. Substrate is bound by residues 177 to 180 (HARE), R235, and 252 to 253 (NR). C246 and C269 are joined by a disulfide. Residue H304 coordinates Zn(2+). Position 305–306 (305–306 (SY)) interacts with substrate. Residues C318 and C352 are joined by a disulfide bond. A substrate-binding site is contributed by Y356. The active-site Proton donor/acceptor is the E378.

It belongs to the peptidase M14 family. It depends on Zn(2+) as a cofactor.

The protein localises to the secreted. The enzyme catalyses Similar to that of carboxypeptidase A (EC 3.4.17.1), but with a preference for bulkier C-terminal residues.. Functionally, carboxypeptidase that catalyzes the release of a C-terminal amino acid, with a preference for large aromatic C-terminal residues. The chain is Carboxypeptidase A2 (Cpa2) from Rattus norvegicus (Rat).